Reading from the N-terminus, the 310-residue chain is N-acetyl-gamma-glutamyl-phosphate reductase (310 aa).

The active site involves Cys117.

It belongs to the NAGSA dehydrogenase family. Type 2 subfamily.

It is found in the cytoplasm. It catalyses the reaction N-acetyl-L-glutamate 5-semialdehyde + phosphate + NADP(+) = N-acetyl-L-glutamyl 5-phosphate + NADPH + H(+). It functions in the pathway amino-acid biosynthesis; L-arginine biosynthesis; N(2)-acetyl-L-ornithine from L-glutamate: step 3/4. In terms of biological role, catalyzes the NADPH-dependent reduction of N-acetyl-5-glutamyl phosphate to yield N-acetyl-L-glutamate 5-semialdehyde. The sequence is that of N-acetyl-gamma-glutamyl-phosphate reductase from Allorhizobium ampelinum (strain ATCC BAA-846 / DSM 112012 / S4) (Agrobacterium vitis (strain S4)).